A 194-amino-acid polypeptide reads, in one-letter code: MLQKLLEANNLKFEDKFYEDCEVFVKLLQQWGTIHNLSGRLTRDDIYENILDSLYPLTFIEKYESFADIGTGAGYPGLILAIALRDTKAYLIEPRIKRVSFLNFVKATLKLDNLVVLCNRVEEVKDLQVDLITSRAVTNTSLLLDITKNIKKPNSSYLFYKGSMLESELENAKVNNYKIVNKKDRNYLYIKGLI.

Residues Gly-70, Tyr-75, 121 to 122 (VE), and Arg-135 contribute to the S-adenosyl-L-methionine site.

The protein belongs to the methyltransferase superfamily. RNA methyltransferase RsmG family.

The protein resides in the cytoplasm. It carries out the reaction guanosine(527) in 16S rRNA + S-adenosyl-L-methionine = N(7)-methylguanosine(527) in 16S rRNA + S-adenosyl-L-homocysteine. Specifically methylates the N7 position of guanine in position 527 of 16S rRNA. The sequence is that of Ribosomal RNA small subunit methyltransferase G from Aliarcobacter butzleri (strain RM4018) (Arcobacter butzleri).